Reading from the N-terminus, the 355-residue chain is Phosphoribosylformylglycinamidine cyclo-ligase (355 aa).

The protein belongs to the AIR synthase family.

The protein resides in the cytoplasm. It catalyses the reaction 2-formamido-N(1)-(5-O-phospho-beta-D-ribosyl)acetamidine + ATP = 5-amino-1-(5-phospho-beta-D-ribosyl)imidazole + ADP + phosphate + H(+). It participates in purine metabolism; IMP biosynthesis via de novo pathway; 5-amino-1-(5-phospho-D-ribosyl)imidazole from N(2)-formyl-N(1)-(5-phospho-D-ribosyl)glycinamide: step 2/2. The polypeptide is Phosphoribosylformylglycinamidine cyclo-ligase (Hamiltonella defensa subsp. Acyrthosiphon pisum (strain 5AT)).